The following is a 331-amino-acid chain: Glycerol-3-phosphate dehydrogenase [NAD(P)+] (331 aa).

Residues W11 and K101 each coordinate NADPH. Sn-glycerol 3-phosphate contacts are provided by K101, G132, and S134. An NADPH-binding site is contributed by A136. Residues K188, D241, S251, R252, and N253 each contribute to the sn-glycerol 3-phosphate site. Catalysis depends on K188, which acts as the Proton acceptor. NADPH is bound at residue R252. E278 provides a ligand contact to NADPH.

The protein belongs to the NAD-dependent glycerol-3-phosphate dehydrogenase family.

It is found in the cytoplasm. The enzyme catalyses sn-glycerol 3-phosphate + NAD(+) = dihydroxyacetone phosphate + NADH + H(+). It carries out the reaction sn-glycerol 3-phosphate + NADP(+) = dihydroxyacetone phosphate + NADPH + H(+). The protein operates within membrane lipid metabolism; glycerophospholipid metabolism. In terms of biological role, catalyzes the reduction of the glycolytic intermediate dihydroxyacetone phosphate (DHAP) to sn-glycerol 3-phosphate (G3P), the key precursor for phospholipid synthesis. In Phytoplasma mali (strain AT), this protein is Glycerol-3-phosphate dehydrogenase [NAD(P)+].